The following is a 200-amino-acid chain: Probable nicotinate-nucleotide adenylyltransferase (200 aa).

The protein belongs to the NadD family.

The enzyme catalyses nicotinate beta-D-ribonucleotide + ATP + H(+) = deamido-NAD(+) + diphosphate. Its pathway is cofactor biosynthesis; NAD(+) biosynthesis; deamido-NAD(+) from nicotinate D-ribonucleotide: step 1/1. In terms of biological role, catalyzes the reversible adenylation of nicotinate mononucleotide (NaMN) to nicotinic acid adenine dinucleotide (NaAD). The protein is Probable nicotinate-nucleotide adenylyltransferase of Clavibacter sepedonicus (Clavibacter michiganensis subsp. sepedonicus).